The sequence spans 577 residues: Glucose-6-phosphate 1-dehydrogenase, chloroplastic (577 aa).

The disordered stretch occupies residues 1–20 (MGVQLRLNPCSSSSAATSPS). The N-terminal 63 residues, 1 to 63 (MGVQLRLNPC…QPRKHFEVFS (63 aa)), are a transit peptide targeting the chloroplast. Positions 11–20 (SSSSAATSPS) are enriched in low complexity. NADP(+)-binding positions include 97–104 (GASGDLAK) and Arg131. Cys149 and Cys157 are joined by a disulfide. An NADP(+)-binding site is contributed by Lys234. D-glucose 6-phosphate is bound by residues Lys234, 264–268 (HYLGK), Glu302, and Asp321. The active-site Proton acceptor is His326. Lys419 serves as a coordination point for NADP(+). Residues Lys422 and Lys427 each coordinate D-glucose 6-phosphate. NADP(+) contacts are provided by Arg428, Arg432, and Arg461. Residue Gln463 participates in D-glucose 6-phosphate binding. Residues 469 to 471 (YLK) and Arg554 each bind NADP(+).

Belongs to the glucose-6-phosphate dehydrogenase family. Homodimer. Green tissues, leaves and chloroplasts.

The protein localises to the plastid. It is found in the chloroplast. It carries out the reaction D-glucose 6-phosphate + NADP(+) = 6-phospho-D-glucono-1,5-lactone + NADPH + H(+). Its pathway is carbohydrate degradation; pentose phosphate pathway; D-ribulose 5-phosphate from D-glucose 6-phosphate (oxidative stage): step 1/3. With respect to regulation, regulated by metabolites. Post-translationally inactivated by cysteine-mediated redox modification via the ferredoxin-thioredoxin system in the light and this avoids futile cycles with photosynthetic CO2 fixation. Functionally, catalyzes the rate-limiting step of the oxidative pentose-phosphate pathway, which represents a route for the dissimilation of carbohydrates besides glycolysis. The main function of this enzyme is to provide reducing power (NADPH) and pentose phosphates for fatty acid and nucleic acid synthesis which are involved in membrane synthesis and cell division. The sequence is that of Glucose-6-phosphate 1-dehydrogenase, chloroplastic from Solanum tuberosum (Potato).